Consider the following 141-residue polypeptide: Putative antiporter subunit mnhB2 (141 aa).

Helical transmembrane passes span 10–30, 35–55, 70–90, and 116–136; these read TVTKIVVFILLTFGFYLFLAG, GGGFIGGLVFSSAFLLMFLAF, ILMICGSLLSFLTAVVPMFFG, and VFEAGIVLAVVGVVVTVMLSI.

It belongs to the CPA3 antiporters (TC 2.A.63) subunit B family. In terms of assembly, may form a heterooligomeric complex that consists of seven subunits: mnhA2, mnhB2, mnhC2, mnhD2, mnhE2, mnhF2 and mnhG2.

Its subcellular location is the cell membrane. This chain is Putative antiporter subunit mnhB2 (mnhB2), found in Staphylococcus saprophyticus subsp. saprophyticus (strain ATCC 15305 / DSM 20229 / NCIMB 8711 / NCTC 7292 / S-41).